The primary structure comprises 212 residues: Thymidylate kinase (212 aa).

10-17 serves as a coordination point for ATP; sequence GLDGAGKT.

Belongs to the thymidylate kinase family.

The enzyme catalyses dTMP + ATP = dTDP + ADP. Phosphorylation of dTMP to form dTDP in both de novo and salvage pathways of dTTP synthesis. This chain is Thymidylate kinase, found in Blochmanniella pennsylvanica (strain BPEN).